The primary structure comprises 286 residues: MKQYQDLIKDIFENGYETDDRTGTGTIALFGSKLRWDLTKGFPAVTTKKLAWKACIAELIWFLSGSTNVNDLRLIQHDSLIQGKTVWDENYENQAKDLGYHSGELGPIYGKQWRDFGGVDQIIEVIDRIKKLPNDRRQIVSAWNPAELKYMALPPCHMFYQFNVRNGYLDLQWYQRSVDVFLGLPFNIASYATLVHIVAKMCNLIPGDLIFSGGNTHIYMNHVEQCKEILRREPKELCELVISGLPYKFRYLSTKEQLKYVLKLRPKDFVLNNYVSHPPIKGKMAV.

DUMP-binding positions include arginine 21 and 136–137 (RR). The active-site Nucleophile is cysteine 156. DUMP-binding positions include 176 to 179 (RSVD), asparagine 187, and 217 to 219 (HIY). Aspartate 179 serves as a coordination point for (6R)-5,10-methylene-5,6,7,8-tetrahydrofolate. Alanine 285 is a binding site for (6R)-5,10-methylene-5,6,7,8-tetrahydrofolate.

It belongs to the thymidylate synthase family. Homodimer.

The catalysed reaction is dUMP + (6R)-5,10-methylene-5,6,7,8-tetrahydrofolate = 7,8-dihydrofolate + dTMP. It functions in the pathway pyrimidine metabolism; dTTP biosynthesis. In Enterobacteria phage T4 (Bacteriophage T4), this protein is Thymidylate synthase (TD).